Here is a 95-residue protein sequence, read N- to C-terminus: RING finger protein Z (95 aa).

A compositionally biased stretch (low complexity) spans 1–16 (MGNSKSKSNPSSSSES). Residues 1-23 (MGNSKSKSNPSSSSESQKGAPTV) form a disordered region. The N-myristoyl glycine; by host moiety is linked to residue Gly2. The RING-type; atypical zinc-finger motif lies at 40–76 (CKCCWFADKNLIKCSDHYLCLRCLNVMLKNSDLCNIC). The short motif at 90-93 (PSAP) is the PTAP/PSAP motif element.

Belongs to the arenaviridae Z protein family. Interacts with protein NP; this interaction probably directs the encapsidated genome to budding sites. Interacts (via RING domain) with polymerase L; this interaction inhibits viral transcription and replication, Z partially blocks the product exit tunnel for the releasing nascent RNA product. Interacts with the glycoprotein complex; this interaction plays a role in virion budding. Interacts with host eIF4E; this interaction results in eIF4E reduced affinity for its substrate, the 5'-m7 G cap structure. Interacts (via late-budding domain) with host TSG101; this interaction is essential for budding and release of viral particles. Interacts with host RPLP0; this interaction may serve to load ribosome-like particles inside the virion. Interacts with host PML; this interaction induces PML bodies redistribution in the cytoplasm upon viral infection. In terms of processing, myristoylation is required for the role of RING finger protein Z in assembly and budding.

It is found in the virion. The protein resides in the host cytoplasm. It localises to the host perinuclear region. The protein localises to the host cell membrane. Functionally, plays a crucial role in virion assembly and budding. Expressed late in the virus life cycle, it acts as an inhibitor of viral transcription and RNA synthesis by interacting with the viral polymerase L. Presumably recruits the NP encapsidated genome to cellular membranes at budding sites via direct interaction with NP. Plays critical roles in the final steps of viral release by interacting with host TSG101, a member of the vacuolar protein-sorting pathway and using other cellular host proteins involved in vesicle formation pathway. The budding of the virus progeny occurs after association of protein Z with the viral glycoprotein complex SSP-GP1-GP2 at the cell periphery, step that requires myristoylation of protein Z. Also selectively represses protein production by associating with host eIF4E. In cell-based minigenome assay, has an inhibitory effect on the ribonucleoprotein machinery (vRNP), which is responsible for the replication and transcription of the viral genome. This is RING finger protein Z from Guanarito mammarenavirus (isolate Human/Venezuela/NH-95551/1990) (GTOV).